The chain runs to 621 residues: Altered inheritance of mitochondria protein 9, mitochondrial (621 aa).

The transit peptide at 1–40 (MIRSTTAKLGKRCATLRVRASPILRPLVATRCITNKADEV) directs the protein to the mitochondrion.

This sequence belongs to the AIM9 family.

It is found in the mitochondrion. This chain is Altered inheritance of mitochondria protein 9, mitochondrial (AIM9), found in Zygosaccharomyces rouxii (strain ATCC 2623 / CBS 732 / NBRC 1130 / NCYC 568 / NRRL Y-229).